The sequence spans 375 residues: Cyclic AMP receptor 2 (375 aa).

Topologically, residues 1 to 10 (MTIMSDIIAQ) are extracellular. Residues 11–30 (RTILLIADFSSIIGCSLVLI) form a helical membrane-spanning segment. The Cytoplasmic portion of the chain corresponds to 31-44 (GFWRLKLLRNHITK). A helical membrane pass occupies residues 45–65 (IISLFCATSLFKDVISTIITL). The Extracellular segment spans residues 66–82 (LYKPDQTESGFPCYLHA). Residues 83 to 108 (IVITFGSLACWLWTLMLSFSIYNLIV) form a helical membrane-spanning segment. Residues 109–119 (RREPEPERFEK) are Cytoplasmic-facing. A helical membrane pass occupies residues 120–138 (FYFCLCYGLPLISTIVMLS). Topologically, residues 139–161 (THIIQPVGGWCWIGDNYDGYRFG) are extracellular. A helical transmembrane segment spans residues 162 to 180 (LFYGPFFFIWGTSAILVGL). At 181–204 (TSKYTYSVIRSSVSDNKDKHMTYQ) the chain is on the cytoplasmic side. The residue at position 192 (serine 192) is a Phosphoserine. Residues 205–223 (FKLINYIVVFLVCWVFAIV) form a helical membrane-spanning segment. At 224–234 (NRILNGLNQFP) the chain is on the extracellular side. The chain crosses the membrane as a helical span at residues 235 to 259 (TVPNVLHTYFSVSHGFYASITFIYN). The Cytoplasmic portion of the chain corresponds to 260–375 (NPLMWRYFGA…NNINNKNDMI (116 aa)). Phosphoserine is present on residues serine 298 and serine 303. The tract at residues 338–375 (PKENENQNHHHHHHHHHHHNHYNNNNNNNNINNKNDMI) is disordered. Over residues 346–358 (HHHHHHHHHHHNH) the composition is skewed to basic residues. Residues 359–375 (YNNNNNNNNINNKNDMI) are compositionally biased toward low complexity.

Belongs to the G-protein coupled receptor 5 family. In terms of processing, C-terminal Ser or Thr residues may be phosphorylated.

The protein resides in the membrane. Functionally, receptor for cAMP. Coordinates the aggregation of individual cells into a multicellular organism and regulates the expression of a large number of developmentally regulated genes. The activity of this receptor is mediated by G proteins. Plays a key role during tip formation and late development; involved in cAMP-directed patterning of pre stalk cells as they sort before and during tip formation. In Dictyostelium discoideum (Social amoeba), this protein is Cyclic AMP receptor 2 (carB).